The chain runs to 139 residues: MAEGGFWKKLTNFFTASEEDEDIIEEDYMDEGYEAEEGTGFVPVQTRAVPVGSTIWVYQPSSFSFDVDSSFIGARIKDGYIIILNLQDLDDLSAQRLIDFVSGALYSVEGKLKAISSSVFLLVPKNVRVESFNEGFGTE.

It belongs to the SepF family. As to quaternary structure, homodimer. Interacts with FtsZ.

It is found in the cytoplasm. Its function is as follows. Cell division protein that is part of the divisome complex and is recruited early to the Z-ring. Probably stimulates Z-ring formation, perhaps through the cross-linking of FtsZ protofilaments. Its function overlaps with FtsA. The polypeptide is Cell division protein SepF (Coprothermobacter proteolyticus (strain ATCC 35245 / DSM 5265 / OCM 4 / BT)).